A 248-amino-acid polypeptide reads, in one-letter code: 3-deoxy-manno-octulosonate cytidylyltransferase (248 aa).

The protein belongs to the KdsB family.

Its subcellular location is the cytoplasm. It catalyses the reaction 3-deoxy-alpha-D-manno-oct-2-ulosonate + CTP = CMP-3-deoxy-beta-D-manno-octulosonate + diphosphate. Its pathway is nucleotide-sugar biosynthesis; CMP-3-deoxy-D-manno-octulosonate biosynthesis; CMP-3-deoxy-D-manno-octulosonate from 3-deoxy-D-manno-octulosonate and CTP: step 1/1. It functions in the pathway bacterial outer membrane biogenesis; lipopolysaccharide biosynthesis. Activates KDO (a required 8-carbon sugar) for incorporation into bacterial lipopolysaccharide in Gram-negative bacteria. This is 3-deoxy-manno-octulosonate cytidylyltransferase from Erwinia tasmaniensis (strain DSM 17950 / CFBP 7177 / CIP 109463 / NCPPB 4357 / Et1/99).